The chain runs to 95 residues: Aspartyl/glutamyl-tRNA(Asn/Gln) amidotransferase subunit C (95 aa).

Belongs to the GatC family. In terms of assembly, heterotrimer of A, B and C subunits.

It catalyses the reaction L-glutamyl-tRNA(Gln) + L-glutamine + ATP + H2O = L-glutaminyl-tRNA(Gln) + L-glutamate + ADP + phosphate + H(+). It carries out the reaction L-aspartyl-tRNA(Asn) + L-glutamine + ATP + H2O = L-asparaginyl-tRNA(Asn) + L-glutamate + ADP + phosphate + 2 H(+). Its function is as follows. Allows the formation of correctly charged Asn-tRNA(Asn) or Gln-tRNA(Gln) through the transamidation of misacylated Asp-tRNA(Asn) or Glu-tRNA(Gln) in organisms which lack either or both of asparaginyl-tRNA or glutaminyl-tRNA synthetases. The reaction takes place in the presence of glutamine and ATP through an activated phospho-Asp-tRNA(Asn) or phospho-Glu-tRNA(Gln). The protein is Aspartyl/glutamyl-tRNA(Asn/Gln) amidotransferase subunit C of Geobacter sp. (strain M21).